The following is a 337-amino-acid chain: Large ribosomal subunit protein uL3 (337 aa).

Positions 1–20 (MASIHRPKRGSLAFSPRKRA) are disordered.

Belongs to the universal ribosomal protein uL3 family. In terms of assembly, part of the 50S ribosomal subunit. Forms a cluster with proteins L14 and L24e.

One of the primary rRNA binding proteins, it binds directly near the 3'-end of the 23S rRNA, where it nucleates assembly of the 50S subunit. The protein is Large ribosomal subunit protein uL3 of Methanosarcina mazei (strain ATCC BAA-159 / DSM 3647 / Goe1 / Go1 / JCM 11833 / OCM 88) (Methanosarcina frisia).